The sequence spans 70 residues: Large ribosomal subunit protein bL28c (70 aa).

The protein belongs to the bacterial ribosomal protein bL28 family.

It localises to the plastid. It is found in the cyanelle. The polypeptide is Large ribosomal subunit protein bL28c (rpl28) (Cyanophora paradoxa).